A 104-amino-acid chain; its full sequence is Small ribosomal subunit protein uS10 (104 aa).

It belongs to the universal ribosomal protein uS10 family. Part of the 30S ribosomal subunit.

Functionally, involved in the binding of tRNA to the ribosomes. This is Small ribosomal subunit protein uS10 from Ralstonia nicotianae (strain ATCC BAA-1114 / GMI1000) (Ralstonia solanacearum).